Consider the following 208-residue polypeptide: ATP-dependent Clp protease proteolytic subunit 1 (208 aa).

The Nucleophile role is filled by Ser108. His133 is a catalytic residue.

The protein belongs to the peptidase S14 family. Fourteen ClpP subunits assemble into 2 heptameric rings which stack back to back to give a disk-like structure with a central cavity, resembling the structure of eukaryotic proteasomes.

The protein localises to the cytoplasm. The enzyme catalyses Hydrolysis of proteins to small peptides in the presence of ATP and magnesium. alpha-casein is the usual test substrate. In the absence of ATP, only oligopeptides shorter than five residues are hydrolyzed (such as succinyl-Leu-Tyr-|-NHMec, and Leu-Tyr-Leu-|-Tyr-Trp, in which cleavage of the -Tyr-|-Leu- and -Tyr-|-Trp bonds also occurs).. Functionally, cleaves peptides in various proteins in a process that requires ATP hydrolysis. Has a chymotrypsin-like activity. Plays a major role in the degradation of misfolded proteins. In Corynebacterium efficiens (strain DSM 44549 / YS-314 / AJ 12310 / JCM 11189 / NBRC 100395), this protein is ATP-dependent Clp protease proteolytic subunit 1.